The chain runs to 843 residues: Protein piwi (843 aa).

Positions 1 to 12 (MADDQGRGRRRP) match the Nuclear localization signal motif. A disordered region spans residues 1-76 (MADDQGRGRR…TERKPWGDQY (76 aa)). Positions 1–257 (MADDQGRGRR…ILLGTEITHK (257 aa)) are interaction with CBX5 and papi. Symmetric dimethylarginine occurs at positions 7, 9, 10, and 11. Over residues 41 to 72 (PRADPRIEASRERRALEEAPRREGGPTERKPW) the composition is skewed to basic and acidic residues. One can recognise a PAZ domain in the interval 263 to 372 (TIYDIMRRCS…LIPELCRVTG (110 aa)). A Piwi domain is found at 538–829 (LILCLVPNDN…LATLVGTNLH (292 aa)). Residue glutamine 589 coordinates Mg(2+). Active-site residues include aspartate 614 and aspartate 685. A Mg(2+)-binding site is contributed by leucine 843.

Belongs to the argonaute family. Piwi subfamily. In terms of assembly, in the ovaries, part of a complex composed of at least Panx, nxf2, piwi and Nxt1. The complex is knowns as Panx-induced co-transcriptional silencing (PICTS) complex, Panx-nxf2-dependent TAP/p15 silencing (Pandas complex), SFiNX (silencing factor interacting nuclear export variant) or piwi-Panx-nxf2-p15 (PPNP) complex. Interacts with vas; this interaction is RNA-independent. Interacts with Dcr-1 and Fmr1; these interactions occur in polar granules. Interacts (via N-terminal region) with CBX5 (via chromoshadow domain). Forms a complex with Hsp83 and Hop; probably Hop mediates the interaction between piwi and Hsp83. Forms a complex with Yb body components armi and fs(1)Yb; this interaction is required for proper piRNA loading and nuclear localization of piwi. Interaction of Piwi and fs(1)Yb is likely to occur via armi. Interacts (via the N-terminal region when unmethylated or symmetrically methylated at Arg-10) with papi (via Tudor domain). Interacts with vret. Interacts with Panx. Interacts with arx. Interacts with Tudor-SN. Interacts with Nup358 (via N-terminus). Associates with the nuclear pore complex via interaction with Elys. Interacts with thoc5; the interaction might be partly RNA-mediated. Interacts with xmas-2. Post-translationally, symmetrically dimethylated, most likely by csul. Methylation at Arg-10 enhances binding to papi whereas methylation at Arg-7, Arg-9 or Arg-11 reduces binding affinity to papi. In terms of processing, phosphorylated on serine and tyrosine residues in an Hsp83-dependent manner. As to expression, expressed in ovaries (at protein level). Expressed somatically in ovariole terminal filament cells, epithelial sheath cells, cap cells and follicle cells (at protein level). Expressed in nurse cells and oocytes in developing egg chambers (at protein level). In embryos, accumulates in pole cells (at protein level). In larval and adult testis, expressed in a germinal proliferative center at the apical tip containing somatic hub cells and mitotically dividing germ stem cells (at protein level).

The protein resides in the cytoplasm. It is found in the nucleus. The protein localises to the nucleoplasm. It localises to the chromosome. Acts via the piwi-interacting RNA (piRNA) metabolic process, which mediates the repression of transposable elements during meiosis by forming complexes composed of piRNAs and Piwi proteins and governs the methylation and subsequent repression of transposons. Directly binds piRNAs, a class of 24 to 30 nucleotide RNAs that are generated by a Dicer-independent mechanism and are primarily derived from transposons and other repeated sequence elements. In ovarian somatic cells, mediates silencing of transposable elements at the transcriptional level in a mael-dependent manner. Involved in silencing of long terminal repeat (LTR) retrotransposons in male germline. In testis, regulates spermatogenesis together with Tudor-SN. In germ cells, mediates silencing at both transcriptional and post-transcriptional levels and is involved in the maintenance of populations of primary and secondary piRNAs. Piwi-mediated transcriptional silencing is accompanied by the formation of His3 trimethylated on 'Lys-10' (H3K9me3) associated euchromatin and heterochromatin. In ovary, associates predominantly with antisense piRNAs that contain uridine at their 5' end. Association with sense piRNAs is also observed but to a lesser extent. Mediates a somatic signaling mechanism required for the maintenance of germline stem cells to produce and maintain a daughter germline stem cell. It is not essential for the further differentiation of the committed daughter cell. Acts cell autonomously to promote germline stem cell division. Its role in stem cell maintenance does not seem to require nuclear localization. Required maternally for the posterior localization of osk and vas and for pole cell formation during oogenesis and early embryogenesis. Together with Hop and Hsp83, mediates canalization, also known as developmental robustness, likely via epigenetic silencing of existing genetic variants and suppression of transposon-induced new genetic variation. Shows RNA cleavage activity, although is not required for any of its known functions. In the ovaries, forms a complex with nxf2, Panx and Nxt1 which acts as effectors of cotranscriptional transposon silencing. The protein is Protein piwi of Drosophila melanogaster (Fruit fly).